We begin with the raw amino-acid sequence, 569 residues long: Acyl-CoA-binding domain-containing protein 5 (569 aa).

Positions 1–31 (MELFYELLLTAAASLLVAFLLARLLASAATA) are cleaved as a signal peptide. An ACB domain is found at 415–506 (IEKRFGVAAA…LSEAIPGWMG (92 aa)). Residues K474 and Y493 each coordinate an acyl-CoA. N508 is a glycosylation site (N-linked (GlcNAc...) asparagine). Polar residues-rich tracts occupy residues 533–544 (INQHDSQGNEDN) and 552–569 (LTSS…IPAE). Positions 533-569 (INQHDSQGNEDNTGMYEGHLTSSPNPEKGQSSDIPAE) are disordered.

This sequence belongs to the ACBP family. Highly expressed in seeds and leaves. Expressed at low levels in roots.

It localises to the endoplasmic reticulum. In terms of biological role, binds medium- and long-chain acyl-CoA esters with high affinity. Can interact in vitro with palmitoyl-CoA and linolenoyl-CoA. Binds phosphatidic acid (PA) and phosphatidylcholine (PC) in vitro. May play a role in the biosynthesis of phospholipids. The chain is Acyl-CoA-binding domain-containing protein 5 from Oryza sativa subsp. japonica (Rice).